The sequence spans 213 residues: ATP phosphoribosyltransferase (213 aa).

It belongs to the ATP phosphoribosyltransferase family. Short subfamily. Heteromultimer composed of HisG and HisZ subunits.

The protein localises to the cytoplasm. The enzyme catalyses 1-(5-phospho-beta-D-ribosyl)-ATP + diphosphate = 5-phospho-alpha-D-ribose 1-diphosphate + ATP. Its pathway is amino-acid biosynthesis; L-histidine biosynthesis; L-histidine from 5-phospho-alpha-D-ribose 1-diphosphate: step 1/9. Functionally, catalyzes the condensation of ATP and 5-phosphoribose 1-diphosphate to form N'-(5'-phosphoribosyl)-ATP (PR-ATP). Has a crucial role in the pathway because the rate of histidine biosynthesis seems to be controlled primarily by regulation of HisG enzymatic activity. The polypeptide is ATP phosphoribosyltransferase (Shouchella clausii (strain KSM-K16) (Alkalihalobacillus clausii)).